Reading from the N-terminus, the 1040-residue chain is Contactin-2 (1040 aa).

The first 30 residues, 1–30, serve as a signal peptide directing secretion; that stretch reads MGTHARKKASLLLLVLATVALVSSPGWSFA. Ig-like C2-type domains lie at 39–130, 135–224, 241–324, 329–413, 419–506, and 511–605; these read PIFE…AVLR, QEFS…SVFS, PSIK…GRII, PEWL…AELA, PDFR…GILS, and TKIT…ATVL. Disulfide bonds link Cys-63/Cys-113, Cys-157/Cys-209, Cys-263/Cys-308, and Cys-350/Cys-397. Asn-78, Asn-200, and Asn-206 each carry an N-linked (GlcNAc...) asparagine glycan. Asn-463, Asn-479, Asn-500, and Asn-527 each carry an N-linked (GlcNAc...) asparagine glycan. 4 Fibronectin type-III domains span residues 612–710, 715–812, 817–913, and 917–1008; these read PPGG…TKEA, APSG…SAEE, APAK…VKPP, and PPGN…NGGT. N-linked (GlcNAc...) asparagine glycosylation is present at Asn-777. The Cell attachment site motif lies at 796 to 798; the sequence is RGD. Asn-832, Asn-920, and Asn-942 each carry an N-linked (GlcNAc...) asparagine glycan. The segment at 895–921 is disordered; the sequence is RAGTGPASPSADAMTVKPPPRRPPGNI. Ala-1015 carries the GPI-anchor amidated alanine lipid modification. Residues 1016-1040 constitute a propeptide, removed in mature form; sequence AARPAHPGPAFSCMVILMLAGYQKL.

Belongs to the immunoglobulin superfamily. Contactin family. In neural tissues in embryos, and in adult brain, spinal cord and cerebellum.

It localises to the cell membrane. May play a role in the initial growth and guidance of axons. May be involved in cell adhesion. In conjunction with another transmembrane protein, CNTNAP2, contributes to the organization of axonal domains at nodes of Ranvier by maintaining voltage-gated potassium channels at the juxtaparanodal region. The protein is Contactin-2 (Cntn2) of Rattus norvegicus (Rat).